A 398-amino-acid polypeptide reads, in one-letter code: Neuroplastin (398 aa).

An N-terminal signal peptide occupies residues 1-28 (MSGSSLPSALALSLLLVSGSLLPGPGAA). 3 consecutive Ig-like domains span residues 29–134 (QNAG…PSIT), 148–235 (PRIV…IEVK), and 238–329 (PDIT…SVVT). Over 29–339 (QNAGFVKSPM…VLRVRSHLAP (311 aa)) the chain is Extracellular. Cysteines 52 and 116 form a disulfide. Positions 149–161 (RIVTSEEVIIRDS) are narpin; mediates binding with FGFR1 and has antidepressant-like activity. An intrachain disulfide couples Cys170 to Cys218. Asn171, Asn197, Asn229, Asn284, Asn296, and Asn317 each carry an N-linked (GlcNAc...) asparagine glycan. Cys259 and Cys316 form a disulfide bridge. The helical transmembrane segment at 340 to 360 (LWPFLGILAEIIILVVIIVVY) threads the bilayer. At 361–398 (EKRKRPDEVPDDDEPAGPMKTNSTNNHKDKNLRQRNTN) the chain is on the cytoplasmic side. Positions 365–398 (RPDEVPDDDEPAGPMKTNSTNNHKDKNLRQRNTN) are disordered.

In terms of assembly, interacts with ATP2B1; this interaction stabilizes ATP2B1 and increases ATPase activity; this interaction controls T cell calcium homeostasis following T cell activation. Interacts with XKR8; promoting its localization at the cell membrane. Isoform 1 is ubiquitously expressed. Isoform 2 is expressed in brain cortex and cerebellum (at protein level).

It localises to the cell membrane. It is found in the postsynaptic density. Functionally, probable homophilic and heterophilic cell adhesion molecule involved in long term potentiation at hippocampal excitatory synapses through activation of p38MAPK. May also regulate neurite outgrowth by activating the FGFR1 signaling pathway. May play a role in synaptic plasticity. Also acts as a chaperone for ATP2B1; stabilizes ATP2B1 and increases its ATPase activity. Promotes localization of XKR8 at the cell membrane. The polypeptide is Neuroplastin (NPTN) (Homo sapiens (Human)).